Consider the following 318-residue polypeptide: uncharacterized protein (318 aa).

To A.aeolicus AA07 and AA34.

This is an uncharacterized protein from Aquifex aeolicus (strain VF5).